A 313-amino-acid chain; its full sequence is Beta-lactamase BRO-1 (313 aa).

Positions 1-25 are cleaved as a signal peptide; that stretch reads MQRRHFLQKTLLALPIIFSGNLLTG. C26 carries the N-palmitoyl cysteine lipid modification. C26 is lipidated: S-diacylglycerol cysteine. S90 (acyl-ester intermediate) is an active-site residue. Residue 255–257 coordinates substrate; the sequence is KTG.

It belongs to the class-A beta-lactamase family.

It is found in the cell membrane. The catalysed reaction is a beta-lactam + H2O = a substituted beta-amino acid. The chain is Beta-lactamase BRO-1 (bla) from Moraxella catarrhalis (Branhamella catarrhalis).